Here is a 160-residue protein sequence, read N- to C-terminus: F-box protein At1g15015 (160 aa).

Positions 1–44 (MDVTLPHHVVEDILERLPVKTLRKFKCVCSTWRSTIDSQRFKDR) constitute an F-box domain.

In Arabidopsis thaliana (Mouse-ear cress), this protein is F-box protein At1g15015.